The sequence spans 196 residues: Crossover junction endodeoxyribonuclease RuvC (196 aa).

Active-site residues include aspartate 19, glutamate 80, and aspartate 153. Residues aspartate 19, glutamate 80, and aspartate 153 each contribute to the Mg(2+) site.

This sequence belongs to the RuvC family. Homodimer which binds Holliday junction (HJ) DNA. The HJ becomes 2-fold symmetrical on binding to RuvC with unstacked arms; it has a different conformation from HJ DNA in complex with RuvA. In the full resolvosome a probable DNA-RuvA(4)-RuvB(12)-RuvC(2) complex forms which resolves the HJ. The cofactor is Mg(2+).

The protein localises to the cytoplasm. It catalyses the reaction Endonucleolytic cleavage at a junction such as a reciprocal single-stranded crossover between two homologous DNA duplexes (Holliday junction).. In terms of biological role, the RuvA-RuvB-RuvC complex processes Holliday junction (HJ) DNA during genetic recombination and DNA repair. Endonuclease that resolves HJ intermediates. Cleaves cruciform DNA by making single-stranded nicks across the HJ at symmetrical positions within the homologous arms, yielding a 5'-phosphate and a 3'-hydroxyl group; requires a central core of homology in the junction. The consensus cleavage sequence is 5'-(A/T)TT(C/G)-3'. Cleavage occurs on the 3'-side of the TT dinucleotide at the point of strand exchange. HJ branch migration catalyzed by RuvA-RuvB allows RuvC to scan DNA until it finds its consensus sequence, where it cleaves and resolves the cruciform DNA. The polypeptide is Crossover junction endodeoxyribonuclease RuvC (Cutibacterium acnes (strain DSM 16379 / KPA171202) (Propionibacterium acnes)).